The primary structure comprises 306 residues: MSLPDDSRYLKGGPVAQRIIAAVREDAAIAKAEGFPPKLISITVGDTDAVDVYVRNQRAKAQLAGIDFEERRFPATITSGELEAAIHGLNADPRVTGIIIQRPVPAHISVKTLQAAVHPLKDVEGMHPASIGNIVYNQLDLAPCTAAASVELLKETGLDLKGLEVVVVGHSEIVGKPIAFLLMSEGATVTVCHHLTRSVAAHARRADALFVAVGKPRLIKADMVKPGAAVIDIGINSEIGPDGTSRIVGDVDTDSVKDVASWITPVPGGVGPITVAILLRNTMVALSRQRALYEATYGTADRLAAE.

Residues 169 to 171 (GHS) and I235 contribute to the NADP(+) site.

It belongs to the tetrahydrofolate dehydrogenase/cyclohydrolase family. Homodimer.

It catalyses the reaction (6R)-5,10-methylene-5,6,7,8-tetrahydrofolate + NADP(+) = (6R)-5,10-methenyltetrahydrofolate + NADPH. The enzyme catalyses (6R)-5,10-methenyltetrahydrofolate + H2O = (6R)-10-formyltetrahydrofolate + H(+). Its pathway is one-carbon metabolism; tetrahydrofolate interconversion. Catalyzes the oxidation of 5,10-methylenetetrahydrofolate to 5,10-methenyltetrahydrofolate and then the hydrolysis of 5,10-methenyltetrahydrofolate to 10-formyltetrahydrofolate. This is Bifunctional protein FolD 2 from Mesorhizobium japonicum (strain LMG 29417 / CECT 9101 / MAFF 303099) (Mesorhizobium loti (strain MAFF 303099)).